Consider the following 308-residue polypeptide: U-box domain-containing protein 54 (308 aa).

The tract at residues 172–235 is disordered; it reads FSEFSTSAEK…NESDEDPRLE (64 aa). The span at 210 to 227 shows a compositional bias: basic and acidic residues; it reads ESPKKGRKETIEKSKSNE. A U-box domain is found at 232–306; the sequence is PRLEDFKCPI…KDWLEKNPNY (75 aa).

The enzyme catalyses S-ubiquitinyl-[E2 ubiquitin-conjugating enzyme]-L-cysteine + [acceptor protein]-L-lysine = [E2 ubiquitin-conjugating enzyme]-L-cysteine + N(6)-ubiquitinyl-[acceptor protein]-L-lysine.. Its pathway is protein modification; protein ubiquitination. In terms of biological role, functions as an E3 ubiquitin ligase. This Arabidopsis thaliana (Mouse-ear cress) protein is U-box domain-containing protein 54 (PUB54).